An 821-amino-acid chain; its full sequence is Pentatricopeptide repeat-containing protein At4g04790, mitochondrial (821 aa).

Residues 1 to 74 (MVVSKVNKSL…KLLHVTTSDK (74 aa)) constitute a mitochondrion transit peptide. PPR repeat units follow at residues 372 to 406 (SSTS…GLMI), 407 to 441 (SADI…SVKP), 442 to 476 (NTEN…NLEP), 477 to 511 (NSSM…GVKP), 512 to 542 (DSIT…AGVQ), 544 to 574 (TKRI…PDVP), and 578 to 612 (QNEL…ECHV). The disordered stretch occupies residues 801–821 (AFSQAPNKKKPKKKMIVLSTK).

This sequence belongs to the PPR family. P subfamily.

It is found in the mitochondrion. The polypeptide is Pentatricopeptide repeat-containing protein At4g04790, mitochondrial (Arabidopsis thaliana (Mouse-ear cress)).